The chain runs to 232 residues: Large ribosomal subunit protein uL1 (232 aa).

Belongs to the universal ribosomal protein uL1 family. Part of the 50S ribosomal subunit.

Functionally, binds directly to 23S rRNA. The L1 stalk is quite mobile in the ribosome, and is involved in E site tRNA release. Its function is as follows. Protein L1 is also a translational repressor protein, it controls the translation of the L11 operon by binding to its mRNA. This is Large ribosomal subunit protein uL1 from Bordetella bronchiseptica (strain ATCC BAA-588 / NCTC 13252 / RB50) (Alcaligenes bronchisepticus).